Consider the following 95-residue polypeptide: Small ribosomal subunit protein uS19 (95 aa).

The protein belongs to the universal ribosomal protein uS19 family.

Functionally, protein S19 forms a complex with S13 that binds strongly to the 16S ribosomal RNA. In Chloroflexus aggregans (strain MD-66 / DSM 9485), this protein is Small ribosomal subunit protein uS19.